Consider the following 217-residue polypeptide: Probable cytidylate kinase (217 aa).

Glycine 9 to threonine 17 contacts ATP.

It belongs to the cytidylate kinase family. Type 1 subfamily.

It catalyses the reaction CMP + ATP = CDP + ADP. The catalysed reaction is dCMP + ATP = dCDP + ADP. This Vairimorpha ceranae (strain BRL01) (Microsporidian parasite) protein is Probable cytidylate kinase.